The sequence spans 323 residues: uncharacterized protein (323 aa).

This is an uncharacterized protein from Treponema pallidum (strain Nichols).